The primary structure comprises 182 residues: MPSGPISVARQVCVARIGAPHGVRGAMRLWSFTADPLAVGDYGPLSTKDGTRSFEIATARAAKDHLVVTLKGVTTRDEAVRLNGLELYVPRDALPPTEDDEYYHADLIGLPAITTSGEPLGRVLAIHNFGAGDIIEIAPASGPTLLLPFTNAVVPTVDLAAGQVIIELPAEIEGDTPNHPEA.

The PRC barrel domain occupies 99 to 176 (DDEYYHADLI…ELPAEIEGDT (78 aa)).

This sequence belongs to the RimM family. In terms of assembly, binds ribosomal protein uS19.

It is found in the cytoplasm. Functionally, an accessory protein needed during the final step in the assembly of 30S ribosomal subunit, possibly for assembly of the head region. Essential for efficient processing of 16S rRNA. May be needed both before and after RbfA during the maturation of 16S rRNA. It has affinity for free ribosomal 30S subunits but not for 70S ribosomes. The polypeptide is Ribosome maturation factor RimM (Rhodopseudomonas palustris (strain HaA2)).